The chain runs to 316 residues: 4-hydroxy-3-methylbut-2-enyl diphosphate reductase (316 aa).

A [4Fe-4S] cluster-binding site is contributed by Cys-12. Residues His-41 and His-74 each contribute to the (2E)-4-hydroxy-3-methylbut-2-enyl diphosphate site. Positions 41 and 74 each coordinate dimethylallyl diphosphate. 2 residues coordinate isopentenyl diphosphate: His-41 and His-74. Cys-96 provides a ligand contact to [4Fe-4S] cluster. His-124 contacts (2E)-4-hydroxy-3-methylbut-2-enyl diphosphate. His-124 provides a ligand contact to dimethylallyl diphosphate. His-124 provides a ligand contact to isopentenyl diphosphate. The active-site Proton donor is the Glu-126. Residue Thr-169 participates in (2E)-4-hydroxy-3-methylbut-2-enyl diphosphate binding. Cys-199 lines the [4Fe-4S] cluster pocket. 4 residues coordinate (2E)-4-hydroxy-3-methylbut-2-enyl diphosphate: Ser-227, Ser-228, Asn-229, and Ser-271. The dimethylallyl diphosphate site is built by Ser-227, Ser-228, Asn-229, and Ser-271. Ser-227, Ser-228, Asn-229, and Ser-271 together coordinate isopentenyl diphosphate.

The protein belongs to the IspH family. It depends on [4Fe-4S] cluster as a cofactor.

The catalysed reaction is isopentenyl diphosphate + 2 oxidized [2Fe-2S]-[ferredoxin] + H2O = (2E)-4-hydroxy-3-methylbut-2-enyl diphosphate + 2 reduced [2Fe-2S]-[ferredoxin] + 2 H(+). It catalyses the reaction dimethylallyl diphosphate + 2 oxidized [2Fe-2S]-[ferredoxin] + H2O = (2E)-4-hydroxy-3-methylbut-2-enyl diphosphate + 2 reduced [2Fe-2S]-[ferredoxin] + 2 H(+). Its pathway is isoprenoid biosynthesis; dimethylallyl diphosphate biosynthesis; dimethylallyl diphosphate from (2E)-4-hydroxy-3-methylbutenyl diphosphate: step 1/1. The protein operates within isoprenoid biosynthesis; isopentenyl diphosphate biosynthesis via DXP pathway; isopentenyl diphosphate from 1-deoxy-D-xylulose 5-phosphate: step 6/6. Catalyzes the conversion of 1-hydroxy-2-methyl-2-(E)-butenyl 4-diphosphate (HMBPP) into a mixture of isopentenyl diphosphate (IPP) and dimethylallyl diphosphate (DMAPP). Acts in the terminal step of the DOXP/MEP pathway for isoprenoid precursor biosynthesis. In Stenotrophomonas maltophilia (strain R551-3), this protein is 4-hydroxy-3-methylbut-2-enyl diphosphate reductase.